The sequence spans 399 residues: Mannan endo-1,4-beta-mannosidase 4 (399 aa).

Positions 1–26 are cleaved as a signal peptide; sequence MNNSIILIFVAILIIFPNEFSKPTRA. Positions 88 and 203 each coordinate substrate. Glu204 acts as the Proton donor in catalysis. Tyr279 contacts substrate. Glu318 (nucleophile) is an active-site residue. Cys347 and Cys354 are oxidised to a cystine. Trp360 serves as a coordination point for substrate.

Belongs to the glycosyl hydrolase 5 (cellulase A) family. In terms of tissue distribution, expressed in flowers and fruit pericarp.

The protein localises to the secreted. It carries out the reaction Random hydrolysis of (1-&gt;4)-beta-D-mannosidic linkages in mannans, galactomannans and glucomannans.. Functionally, possesses endo-beta-mannanase and mannan transglycosylase activities. May be involved in cell wall degradation during fruit ripening. This chain is Mannan endo-1,4-beta-mannosidase 4 (MAN4), found in Solanum lycopersicum (Tomato).